A 331-amino-acid polypeptide reads, in one-letter code: Phenylalanine--tRNA ligase alpha subunit (331 aa).

E256 provides a ligand contact to Mg(2+).

This sequence belongs to the class-II aminoacyl-tRNA synthetase family. Phe-tRNA synthetase alpha subunit type 1 subfamily. As to quaternary structure, tetramer of two alpha and two beta subunits. Requires Mg(2+) as cofactor.

Its subcellular location is the cytoplasm. It catalyses the reaction tRNA(Phe) + L-phenylalanine + ATP = L-phenylalanyl-tRNA(Phe) + AMP + diphosphate + H(+). This is Phenylalanine--tRNA ligase alpha subunit from Colwellia psychrerythraea (strain 34H / ATCC BAA-681) (Vibrio psychroerythus).